The primary structure comprises 763 residues: MRFNHFSIVDKNFDEQLAELDQLGFRWSVFWDEKKILKDFLIQSPSDMTALQATAELDVIEFLKSSIELDWEIFWNIALQLLDFVPNFDFEIGKAFEYAKNSNLPQIEAEMTTENIISAFYYLLCTRRKTGMILVEHWVSEGLLPLDNHYHFFNDKSLATFDSSLLEREVLWVESPVDSEQRGENDLIKIQIIRPKSTEKLPVVMTASPYHLGINDKANDLALHDMNVELEEKTSHEIHVEQKLPQKLSAKAKELPIVDKAPYRFTHGWTYSLNDYFLTRGFASIYVAGVGTRSSDGFQTSGDYQQIYSMTAVIDWLNGRARAYTSRKKTHEIKASWANGKVAMTGKSYLGTMAYGAATTGVEGLELILAEAGISSWYNYYRENGLVRSPGGFPGEDLDVLAALTYSRNLDGADFLKGNAEYEKRLAEMTAALDRKSGDYNQFWHDRNYLINTDKVKADVLIVHGLQDWNVTPEQAYNFWKALPEGHAKHAFLHRGAHIYMNSWQSIDFSETINAYFVAKLLDRDLNLNLPPVILQENSKDQVWTMMNDFGANTQIKLPLGKTAVSFAQFDNNYDDETFKKYSKDFNVFKKDLFENKANEAVIDLELPSMLTINGPVELELRLKLNDTKGFLSAQILDFGQKKRLEDKVRVKDFKVLDRGRNFMLDDLVELPLVESPYQLVTKGFTNLQNQSLLTVSDLKADEWFTIKFELQPTIYHLEKADKLRVILYSTDFEHTVRDNRKVTYEIDLSQSKLIIPIESVKN.

Residues S348, D468, and H498 each act as charge relay system in the active site.

It belongs to the peptidase S15 family. In terms of assembly, homodimer.

The protein localises to the cytoplasm. The catalysed reaction is Hydrolyzes Xaa-Pro-|- bonds to release unblocked, N-terminal dipeptides from substrates including Ala-Pro-|-p-nitroanilide and (sequentially) Tyr-Pro-|-Phe-Pro-|-Gly-Pro-|-Ile.. Removes N-terminal dipeptides sequentially from polypeptides having unsubstituted N-termini provided that the penultimate residue is proline. The sequence is that of Xaa-Pro dipeptidyl-peptidase (pepX) from Lactococcus lactis subsp. cremoris (Streptococcus cremoris).